The sequence spans 469 residues: Probable glycine dehydrogenase (decarboxylating) subunit 1 (469 aa).

The protein belongs to the GcvP family. N-terminal subunit subfamily. As to quaternary structure, the glycine cleavage system is composed of four proteins: P, T, L and H. In this organism, the P 'protein' is a heterodimer of two subunits.

It catalyses the reaction N(6)-[(R)-lipoyl]-L-lysyl-[glycine-cleavage complex H protein] + glycine + H(+) = N(6)-[(R)-S(8)-aminomethyldihydrolipoyl]-L-lysyl-[glycine-cleavage complex H protein] + CO2. In terms of biological role, the glycine cleavage system catalyzes the degradation of glycine. The P protein binds the alpha-amino group of glycine through its pyridoxal phosphate cofactor; CO(2) is released and the remaining methylamine moiety is then transferred to the lipoamide cofactor of the H protein. The chain is Probable glycine dehydrogenase (decarboxylating) subunit 1 from Staphylothermus marinus (strain ATCC 43588 / DSM 3639 / JCM 9404 / F1).